Here is a 231-residue protein sequence, read N- to C-terminus: Transmembrane protein 225 (231 aa).

Residues 1–13 (MVHILVRKVEATN) are Cytoplasmic-facing. The helical transmembrane segment at 14–34 (MFFSSWTLVFLAVGIIIEEWA) threads the bilayer. Residues 35-67 (ELKLGPQKPTITHSPWICCTPLWPSDGLEVIRN) lie on the Extracellular side of the membrane. Residues 68-88 (ILIVVLSLSFMHNLLLGFEFT) form a helical membrane-spanning segment. The Cytoplasmic segment spans residues 89–97 (YMIPQTKYT). The chain crosses the membrane as a helical span at residues 98–118 (LIMTACLAFLTGILLLGALLL). Residues 119 to 135 (YHHMLRQGESVYYSSYK) lie on the Extracellular side of the membrane. A helical membrane pass occupies residues 136 to 156 (ISWIIFTAYLNVLFLFISGFL). The Cytoplasmic segment spans residues 157 to 231 (SLLQYKQPID…IQARRVTWAL (75 aa)). The RVxF motif lies at 225–229 (RRVTW).

In terms of assembly, interacts (via RVxF motif) with PPP1CC.

The protein localises to the cytoplasmic vesicle. Its subcellular location is the secretory vesicle. It localises to the acrosome membrane. Its function is as follows. Probably inhibits protein phosphatase 1 (PP1) in sperm via binding to catalytic subunit PPP1CC. The chain is Transmembrane protein 225 (TMEM225) from Bos taurus (Bovine).